Reading from the N-terminus, the 136-residue chain is MGATISILASYDNPNLFTAMILMSPLVNADAVSRLNLLAAKLMGTITPNAPVGKLCPESVSRDMDKVYKYQYDPLINHEKIKAGFASQVLKATNKVRKIISKINTPRLSYSREQTMRLVMFQVHIISCNMQIVIEK.

This sequence belongs to the poxviridae K5 protein family.

The chain is Protein K5 from Homo sapiens (Human).